Here is a 456-residue protein sequence, read N- to C-terminus: RuvB-like helicase 1 (456 aa).

70-77 (GPPGTGKT) provides a ligand contact to ATP.

Belongs to the RuvB family. As to quaternary structure, forms homohexameric rings. May form a dodecamer with rept made of two stacked hexameric rings. Component of the chromatin remodeling Ino80 complex. Interacts with Myc and rept. Higher expression occurs in primordia of mesoderm, anterior and posterior midgut and cephalic furrow early in gastrulation, as well as in endoderm and mesoderm lineages during germ band extension. Later in development expression is only maintained in endoderm cells. Expressed in thoracic and abdominal segment neural precursors of all embryonic chordotonal organs.

The protein localises to the nucleus. It catalyses the reaction ATP + H2O = ADP + phosphate + H(+). Acts as a transcriptional coactivator in Wg signaling caused by altered arm signaling. Pont and rept interfere antagonistically with nuclear arm signaling function, and are required to enhance or reduce arm activity, respectively. Also an essential cofactor for the normal function of Myc; required for cellular proliferation and growth. Its function is as follows. Proposed core component of the chromatin remodeling Ino80 complex which is involved in transcriptional regulation, DNA replication and probably DNA repair. This is RuvB-like helicase 1 from Drosophila melanogaster (Fruit fly).